The following is a 54-amino-acid chain: Califin-C (54 aa).

Cys-25 and Cys-53 are oxidised to a cystine. At Leu-36 the chain carries Leucine amide.

The protein belongs to the molluscan ELH family. In terms of assembly, this protein consists of a large 36-residue subunit, bound by a single disulfide-bond to a small 18-residue subunit.

It is found in the secreted. Its function is as follows. Injected in sexually mature animals califin C excites LB and LC cells of the abdominal ganglion and cause egg-laying. The polypeptide is Califin-C (Aplysia californica (California sea hare)).